The chain runs to 409 residues: L-cysteine:1D-myo-inositol 2-amino-2-deoxy-alpha-D-glucopyranoside ligase (409 aa).

Position 43 (C43) interacts with Zn(2+). Residues 43-46, T58, and 81-83 contribute to the L-cysteinyl-5'-AMP site; these read CGIT and NVT. The 'HIGH' region signature appears at 45–55; it reads ITPYDATHMGH. The 'ERGGDP' region motif lies at 183–188; the sequence is ERGGDP. W224 is an L-cysteinyl-5'-AMP binding site. Zn(2+) is bound at residue C228. Residue 246-248 participates in L-cysteinyl-5'-AMP binding; it reads GSD. H253 lines the Zn(2+) pocket. V280 lines the L-cysteinyl-5'-AMP pocket. The 'KMSKS' region signature appears at 286–290; the sequence is KMSKS.

It belongs to the class-I aminoacyl-tRNA synthetase family. MshC subfamily. In terms of assembly, monomer. Requires Zn(2+) as cofactor.

It carries out the reaction 1D-myo-inositol 2-amino-2-deoxy-alpha-D-glucopyranoside + L-cysteine + ATP = 1D-myo-inositol 2-(L-cysteinylamino)-2-deoxy-alpha-D-glucopyranoside + AMP + diphosphate + H(+). Functionally, catalyzes the ATP-dependent condensation of GlcN-Ins and L-cysteine to form L-Cys-GlcN-Ins. The chain is L-cysteine:1D-myo-inositol 2-amino-2-deoxy-alpha-D-glucopyranoside ligase (mshC) from Streptomyces avermitilis (strain ATCC 31267 / DSM 46492 / JCM 5070 / NBRC 14893 / NCIMB 12804 / NRRL 8165 / MA-4680).